The sequence spans 99 residues: Cystatin (99 aa).

The 97-residue stretch at Gly3–Trp99 folds into the Cystatin domain. The short motif at Gln47–Gly51 is the Secondary area of contact element. Cys65 and Cys81 are oxidised to a cystine.

It belongs to the cystatin family. In terms of tissue distribution, expressed by the venom gland.

It is found in the secreted. Its function is as follows. Inhibits various C1 cysteine proteases including cathepsin L (Ki is 0.1 nM), papain (Ki is 0.19 nM), cathepsin S (Ki is 1.2 nM), and cathepsin B (Ki is 2.5 nM). This protein has no toxic activity and its function in the venom is unknown. It may play a role as housekeeping or regulatory protein. The polypeptide is Cystatin (Naja atra (Chinese cobra)).